The sequence spans 129 residues: MILGLGMDVVEVARIERILAGPPARVDRFLERCFTARERAYCDAARDRATRYAARFAAKEAASKALGAPAGIRFTDVEVVRGAGAPVLELAGVAATAAARLGVRRVLVTLTHDGGVAAATVVLDGEEAR.

Mg(2+) is bound by residues Asp8 and Glu60.

Belongs to the P-Pant transferase superfamily. AcpS family. It depends on Mg(2+) as a cofactor.

It is found in the cytoplasm. It catalyses the reaction apo-[ACP] + CoA = holo-[ACP] + adenosine 3',5'-bisphosphate + H(+). Transfers the 4'-phosphopantetheine moiety from coenzyme A to a Ser of acyl-carrier-protein. This Anaeromyxobacter sp. (strain Fw109-5) protein is Holo-[acyl-carrier-protein] synthase.